We begin with the raw amino-acid sequence, 101 residues long: Enhancer of yellow 2 transcription factor (101 aa).

Belongs to the ENY2 family. In terms of assembly, component of the nuclear pore complex (NPC)-associated AMEX complex (anchoring and mRNA export complex), composed of at least e(y)2 and xmas-2. Component of the SAGA transcription coactivator-HAT complexes, at least composed of Ada2b, e(y)2, Pcaf/Gcn5, Taf10 and Nipped-A/Trrap. Within the SAGA complex, e(y)2, Sgf11, and not/nonstop form an additional subcomplex of SAGA called the DUB module (deubiquitination module). Component of the THO complex, composed of at least e(y)2, HPR1, THO2, THOC5, THOC6 and THOC7. Interacts with e(y)1. Interacts with su(Hw) (via zinc fingers). Interacts with xmas-2; required for localization to the nuclear periphery. Interacts with the nuclear pore complex (NPC).

The protein resides in the nucleus. The protein localises to the nucleoplasm. It localises to the cytoplasm. Involved in mRNA export coupled transcription activation by association with both the AMEX and the SAGA complexes. The SAGA complex is a multiprotein complex that activates transcription by remodeling chromatin and mediating histone acetylation and deubiquitination. Within the SAGA complex, participates in a subcomplex that specifically deubiquitinates histone H2B. The SAGA complex is recruited to specific gene promoters by activators, where it is required for transcription. Required for nuclear receptor-mediated transactivation. Involved in transcription elongation by recruiting the THO complex onto nascent mRNA. The AMEX complex functions in docking export-competent ribonucleoprotein particles (mRNPs) to the nuclear entrance of the nuclear pore complex (nuclear basket). AMEX participates in mRNA export and accurate chromatin positioning in the nucleus by tethering genes to the nuclear periphery. The polypeptide is Enhancer of yellow 2 transcription factor (Drosophila erecta (Fruit fly)).